The chain runs to 351 residues: Dihydroorotate dehydrogenase (quinone) (351 aa).

FMN is bound by residues alanine 61–lysine 65 and threonine 85. Substrate is bound at residue lysine 65. Asparagine 110–phenylalanine 114 provides a ligand contact to substrate. FMN contacts are provided by asparagine 139 and asparagine 172. Asparagine 172 lines the substrate pocket. The Nucleophile role is filled by serine 175. A substrate-binding site is contributed by asparagine 177. 2 residues coordinate FMN: lysine 217 and threonine 245. Asparagine 246–threonine 247 contacts substrate. FMN is bound by residues glycine 268, glycine 297, and tyrosine 318 to threonine 319.

Belongs to the dihydroorotate dehydrogenase family. Type 2 subfamily. As to quaternary structure, monomer. It depends on FMN as a cofactor.

The protein localises to the cell membrane. It carries out the reaction (S)-dihydroorotate + a quinone = orotate + a quinol. It functions in the pathway pyrimidine metabolism; UMP biosynthesis via de novo pathway; orotate from (S)-dihydroorotate (quinone route): step 1/1. Its function is as follows. Catalyzes the conversion of dihydroorotate to orotate with quinone as electron acceptor. This is Dihydroorotate dehydrogenase (quinone) from Xylella fastidiosa (strain 9a5c).